A 444-amino-acid chain; its full sequence is Glutamyl-tRNA reductase (444 aa).

Substrate-binding positions include 41–44 (TCNR), serine 102, 107–109 (ERE), and glutamine 113. The active-site Nucleophile is cysteine 42. 181–186 (GTGSYA) provides a ligand contact to NADP(+).

The protein belongs to the glutamyl-tRNA reductase family. As to quaternary structure, homodimer.

It catalyses the reaction (S)-4-amino-5-oxopentanoate + tRNA(Glu) + NADP(+) = L-glutamyl-tRNA(Glu) + NADPH + H(+). It participates in porphyrin-containing compound metabolism; protoporphyrin-IX biosynthesis; 5-aminolevulinate from L-glutamyl-tRNA(Glu): step 1/2. Functionally, catalyzes the NADPH-dependent reduction of glutamyl-tRNA(Glu) to glutamate 1-semialdehyde (GSA). The chain is Glutamyl-tRNA reductase from Cutibacterium acnes (strain DSM 16379 / KPA171202) (Propionibacterium acnes).